Reading from the N-terminus, the 1109-residue chain is ABC transporter G family member 28 (1109 aa).

The next 2 membrane-spanning stretches (helical) occupy residues 5 to 25 (NSYFPGNFVPLFFVFIVLILQ) and 291 to 311 (NITAYGIMLFAGLGFLLIILY). Residues 325-411 (QAKSREKAVQ…DTKKGKKKEK (87 aa)) form a disordered region. Residues 339-357 (SQSREKWKSAKDIAKKHAT) show a composition bias toward basic and acidic residues. Residues 499 to 741 (VAFKDLSITL…FSSLGIVVPE (243 aa)) enclose the ABC transporter domain. 533–540 (GPSGAGKT) lines the ATP pocket. The ABC transmembrane type-2 domain maps to 859–1056 (QQYRYFLGRL…ALEAFVVSNA (198 aa)). 6 helical membrane passes run 879–899 (LAVDYLILLLAGICLGTLAKV), 904–924 (FGAMGYTYTVIAVSLLCKITA), 954–974 (TVDHFNTIVKPLVYLSMFYFF), 986–1006 (VVLICLVYCVTGIAYTLAILF), 1008–1028 (PGPAQLWSVLLPVVLTLIATS), and 1084–1104 (CLVFLTLTGILSRCAAFFCMV).

The protein belongs to the ABC transporter superfamily. ABCG family. Eye pigment precursor importer (TC 3.A.1.204) subfamily.

It is found in the membrane. The sequence is that of ABC transporter G family member 28 (ABCG28) from Arabidopsis thaliana (Mouse-ear cress).